The chain runs to 596 residues: MAVEELQSIIKRCQILEEHDFKEEDFGLFQLAGQRCIEDGYINQLLEIIQDEKNKTIIKSMGWNLVGPVVRCLLRGREEDKREECFLIFDLLVKLCNPKELLLGLLELIEEPSGKQISQIILLLLQPLQTVIQKLPNNKAYSVGLALSTLWSQLSLLPVPHSEEQIQADDYGLCQCCKALIEFTKPFVEEVISDKENKENAKLKDELLKFCFKGLKCPLLTAQFLEQSEDVGNDPFRCFASEIIGFLSKIGHPVPQIILNHGRKKRTWDYLEFEEEEDKQLAESVASLTYLVFVQGIGIDQLPMVLSPSYLLQLNMEHIEVFLQRTEQSIYSKGLELLETSLLRLEDNSLCYQYLEIKSFLAVPQGLVKVMTLCPIETLRKKGLSMLQLFIDKLDSQGKYTLFRCLLNTSNHSGVEAFVIQNIKNQIDLSFKKTYNKWFAGAQLISLLDLVLSLPEGAETDLLQNSDRIMASLNLLRYLVIKDNEDDNQTGLWTELGKIENNFLKPLHIGLNMSKAHYEAEIKNSQQNNQVASMCKGVCSVTVGGEEIPSMPPEMQLKVLHSALFTFDLIESVLARVEELIEIKSKSTSEENVGIK.

Position 2 is an N-acetylalanine (Ala-2). The tract at residues 2–555 is alpha-helical region with structural similarity to HEAT repeats; that stretch reads AVEELQSIIK…EEIPSMPPEM (554 aa). The interval 299–596 is important for interaction with RBX1; that stretch reads IDQLPMVLSP…STSEENVGIK (298 aa).

Interacts with FKBP4 and FKBP1A. Interacts with RBX1 (via RING domain). Identified in complexes that contain RBX1 plus one of the cullins CUL1, CUL2, CUL3, and CUL4A. Identified in a SCF complex composed of CUL1, RBX1, SKP1, FBXW7 and GLMN. Component of a SCF-like complex consisting of CUL7, RBX1, SKP1, FBXW8 and GLMN. Interacts with unphosphorylated MET and is released upon MET phosphorylation. Phosphorylated on tyrosine residues. Ubiquitous. Detected in embryonic vasculature and embryonic perichondrium, and in adult eye, brain, heart, testis, kidney, smooth muscle and skeletal muscle.

Its function is as follows. Regulatory component of cullin-RING-based SCF (SKP1-Cullin-F-box protein) E3 ubiquitin-protein ligase complexes. Inhibits E3 ubiquitin ligase activity by binding to the RING domain of RBX1 and inhibiting its interaction with the E2 ubiquitin-conjugating enzyme CDC34. Inhibits RBX1-mediated neddylation of CUL1. Required for normal stability and normal cellular levels of key components of SCF ubiquitin ligase complexes, including FBXW7, RBX1, CUL1, CUL2, CUL3, CUL4A, and thereby contributes to the regulation of CCNE1 and MYC levels. Essential for normal development of the vasculature. Contributes to the regulation of RPS6KB1 phosphorylation. This chain is Glomulin (Glmn), found in Mus musculus (Mouse).